Reading from the N-terminus, the 468-residue chain is Ribulose bisphosphate carboxylase large chain (468 aa).

The residue at position 5 (lysine 5) is an N6,N6,N6-trimethyllysine. Substrate is bound by residues asparagine 114 and threonine 164. The Proton acceptor role is filled by lysine 166. Residue lysine 168 participates in substrate binding. Lysine 192, aspartate 194, and glutamate 195 together coordinate Mg(2+). Lysine 192 is modified (N6-carboxylysine). Residue histidine 285 is the Proton acceptor of the active site. The substrate site is built by arginine 286, histidine 318, and serine 370.

Belongs to the RuBisCO large chain family. Type I subfamily. Heterohexadecamer of 8 large chains and 8 small chains; disulfide-linked. The disulfide link is formed within the large subunit homodimers. Mg(2+) is required as a cofactor. In terms of processing, the disulfide bond which can form in the large chain dimeric partners within the hexadecamer appears to be associated with oxidative stress and protein turnover.

The protein localises to the plastid. The protein resides in the chloroplast. It catalyses the reaction 2 (2R)-3-phosphoglycerate + 2 H(+) = D-ribulose 1,5-bisphosphate + CO2 + H2O. It carries out the reaction D-ribulose 1,5-bisphosphate + O2 = 2-phosphoglycolate + (2R)-3-phosphoglycerate + 2 H(+). RuBisCO catalyzes two reactions: the carboxylation of D-ribulose 1,5-bisphosphate, the primary event in carbon dioxide fixation, as well as the oxidative fragmentation of the pentose substrate in the photorespiration process. Both reactions occur simultaneously and in competition at the same active site. The chain is Ribulose bisphosphate carboxylase large chain from Nolana spathulata (Chilean bell flower).